The sequence spans 193 residues: ATP synthase subunit b 1 (193 aa).

The interval 13–32 is disordered; sequence PAVTGGDTHSGTGVPAEAHG. A helical membrane pass occupies residues 40 to 60; that stretch reads ATFPSQLLWLAITFGLFYLFL.

This sequence belongs to the ATPase B chain family. As to quaternary structure, F-type ATPases have 2 components, F(1) - the catalytic core - and F(0) - the membrane proton channel. F(1) has five subunits: alpha(3), beta(3), gamma(1), delta(1), epsilon(1). F(0) has three main subunits: a(1), b(2) and c(10-14). The alpha and beta chains form an alternating ring which encloses part of the gamma chain. F(1) is attached to F(0) by a central stalk formed by the gamma and epsilon chains, while a peripheral stalk is formed by the delta and b chains.

Its subcellular location is the cell inner membrane. F(1)F(0) ATP synthase produces ATP from ADP in the presence of a proton or sodium gradient. F-type ATPases consist of two structural domains, F(1) containing the extramembraneous catalytic core and F(0) containing the membrane proton channel, linked together by a central stalk and a peripheral stalk. During catalysis, ATP synthesis in the catalytic domain of F(1) is coupled via a rotary mechanism of the central stalk subunits to proton translocation. Functionally, component of the F(0) channel, it forms part of the peripheral stalk, linking F(1) to F(0). In Mesorhizobium japonicum (strain LMG 29417 / CECT 9101 / MAFF 303099) (Mesorhizobium loti (strain MAFF 303099)), this protein is ATP synthase subunit b 1.